Here is a 423-residue protein sequence, read N- to C-terminus: MLDTLLINIGQLLTMDQEDGLLRREAMNTLPVIENGVVGIENDVITFVGTAEEAKGLQAKEVIDCGGKMVSPGLVDPHTHLVFGGSRENEIALKLQGVPYLEILEQGGGILSTVNATKQASKEELVQKAKFHLDRMLSFGVTTVEAKSGYGLDDETEWKQLEATAQLQKEHPIDLVSTFLGAHAVPKEYKGRSKEFLQWMLDLLPEMKEKQLAEFVDIFCETGVFSVEESKEFLLKAKELGFDVKIHADEIDPLGGAEAAAEIGAASADHLVGASDKGIEMLANSNTVATLLPGTTFYLNKESFARGRKMIDEGVAVALATDFNPGSCPTENIQLIMSIAMLKLKMTPEEVWNAVTVNSSYAINRGDVAGKIRVGRKADLVLWDAYNYAYVPYHYGVSHVNTVWKNGNIAYTRGEQSWSTATI.

His78 and His80 together coordinate Fe(3+). Positions 78 and 80 each coordinate Zn(2+). 4-imidazolone-5-propanoate contacts are provided by Arg87, Tyr150, and His183. N-formimidoyl-L-glutamate is bound at residue Tyr150. Fe(3+) is bound at residue His247. His247 contributes to the Zn(2+) binding site. Glu250 lines the 4-imidazolone-5-propanoate pocket. Asp322 serves as a coordination point for Fe(3+). Asp322 provides a ligand contact to Zn(2+). 2 residues coordinate N-formimidoyl-L-glutamate: Asn324 and Gly326. A 4-imidazolone-5-propanoate-binding site is contributed by Ser327.

This sequence belongs to the metallo-dependent hydrolases superfamily. HutI family. Zn(2+) is required as a cofactor. The cofactor is Fe(3+).

It is found in the cytoplasm. It carries out the reaction 4-imidazolone-5-propanoate + H2O = N-formimidoyl-L-glutamate. It functions in the pathway amino-acid degradation; L-histidine degradation into L-glutamate; N-formimidoyl-L-glutamate from L-histidine: step 3/3. Functionally, catalyzes the hydrolytic cleavage of the carbon-nitrogen bond in imidazolone-5-propanoate to yield N-formimidoyl-L-glutamate. It is the third step in the universal histidine degradation pathway. The sequence is that of Imidazolonepropionase from Bacillus cereus (strain G9842).